Reading from the N-terminus, the 189-residue chain is uncharacterized protein (189 aa).

Helical transmembrane passes span 49-69 (LLGI…LFVF), 78-98 (LFHK…LSLF), 102-122 (LTIV…FPMI), and 124-144 (VSIA…LFPA). The disordered stretch occupies residues 165 to 189 (SSSAPDLNYPSLPTQSASPSQRFSA).

Belongs to the chlamydial CPn_0442/CT_006/TC_0274 family.

Its subcellular location is the cell membrane. This is an uncharacterized protein from Chlamydia trachomatis serovar D (strain ATCC VR-885 / DSM 19411 / UW-3/Cx).